A 738-amino-acid chain; its full sequence is Dipeptidyl peptidase 3 (738 aa).

Ala-2 carries the N-acetylalanine modification. His-450 contributes to the Zn(2+) binding site. Glu-451 is a catalytic residue. The Zn(2+) site is built by His-455 and Glu-508.

Belongs to the peptidase M49 family. It depends on Zn(2+) as a cofactor.

It localises to the cytoplasm. It catalyses the reaction Release of an N-terminal dipeptide from a peptide comprising four or more residues, with broad specificity. Also acts on dipeptidyl 2-naphthylamides.. Inhibited by spinorphin, an opioid peptide derived from hemoglobin. Functionally, cleaves and degrades bioactive peptides, including angiotensin, Leu-enkephalin and Met-enkephalin. Also cleaves Arg-Arg-beta-naphthylamide. In Rattus norvegicus (Rat), this protein is Dipeptidyl peptidase 3 (Dpp3).